A 1181-amino-acid chain; its full sequence is Katanin p80 WD40 repeat-containing subunit B1 homolog KTN80.2 (1181 aa).

7 WD repeats span residues 13 to 53, 56 to 95, 98 to 137, 140 to 181, 183 to 221, 224 to 264, and 266 to 303; these read AHSA…SLMS, GHTS…MVRA, GHRS…CIQT, GHSR…HEFK, HEGP…LIGS, PEAT…DGVD, and GWST…IEPY. The short motif at 114-130 is the DWD box element; the sequence is FLASGSSDANLKIWDIR. 5 disordered regions span residues 361–383, 503–597, 702–739, 754–869, and 988–1008; these read AHKS…NKSL, KPPR…ESKS, TSMA…QTRT, KMKS…VIST, and TKTQ…ISGR. Polar residues-rich tracts occupy residues 365–379 and 509–526; these read GSLS…QAGD and RSPS…STDS. 2 stretches are compositionally biased toward basic and acidic residues: residues 530 to 553 and 569 to 585; these read DSKK…DDRG and RSER…ELKS. Composition is skewed to polar residues over residues 703–739, 754–791, 822–841, and 850–859; these read SMAT…QTRT, KMKS…TRTS, SATN…QAKT, and ILNQRQTTNM. Over residues 998–1008 the composition is skewed to basic and acidic residues; that stretch reads TQKEEPQISGR.

It belongs to the WD repeat KATNB1 family. Component of KTN80-KTN1 complexes composed of a hexamer of KTN1-KTN80 heterodimers that sense microtubule (MT) geometry to confer precise MT severing. Interacts directly with AAA1/KTN1. Interacts with subunits of the CUL4-based E3 ligase complex DDB1A and DDB1B. Expressed at low levels in siliques, flowers, leaves, stems and roots.

It localises to the cytoplasm. The protein resides in the cytoskeleton. Functionally, may participate in a complex which severs microtubules in an ATP-dependent manner. Microtubule severing may promote rapid reorganization of cellular microtubule arrays. Confers precision to microtubule (MT) severing by specific targeting of KTN1 to MT cleavage sites such as crossover or branching nucleation sites. Together with other KTN80s, regulates cell elongation by modulating MT organization. Negative regulator of abscisic acid (ABA) responses. May function as a substrate receptor for cullin-RING ubiquitin ligase 4 complexes (CRL4), a family of E3 ligases involved in protein degradation. The polypeptide is Katanin p80 WD40 repeat-containing subunit B1 homolog KTN80.2 (Arabidopsis thaliana (Mouse-ear cress)).